Reading from the N-terminus, the 352-residue chain is NAD(P)H pyrophosphatase NUDT13, mitochondrial (352 aa).

The transit peptide at 1–20 directs the protein to the mitochondrion; the sequence is MSLYCGIACRRKFFWCYRLL. The Nudix hydrolase domain maps to 196 to 323; sequence PQMAPVAITL…PYTQQQNGTF (128 aa). Positions 216 to 240 match the Nudix box motif; it reads RQSSFPKGMYSALAGFCDIGESVEE.

It belongs to the Nudix hydrolase family. Requires Mg(2+) as cofactor. It depends on Mn(2+) as a cofactor. Highly expressed in metastasis-suppressed chromosome 6 melanoma hybrids.

It localises to the mitochondrion. The catalysed reaction is NADH + H2O = reduced beta-nicotinamide D-ribonucleotide + AMP + 2 H(+). It carries out the reaction NAD(+) + H2O = beta-nicotinamide D-ribonucleotide + AMP + 2 H(+). The enzyme catalyses NADPH + H2O = reduced beta-nicotinamide D-ribonucleotide + adenosine 2',5'-bisphosphate + 2 H(+). Functionally, NAD(P)H pyrophosphatase that hydrolyzes NADH into NMNH and AMP, and NADPH into NMNH and 2',5'-ADP. Has a marked preference for the reduced pyridine nucleotides. Does not show activity toward NAD-capped RNAs; the NAD-cap is an atypical cap present at the 5'-end of some RNAs. In Homo sapiens (Human), this protein is NAD(P)H pyrophosphatase NUDT13, mitochondrial.